Reading from the N-terminus, the 472-residue chain is Poly(A) polymerase catalytic subunit (472 aa).

Catalysis depends on residues Asp-194 and Asp-196.

The protein belongs to the poxviridae poly(A) polymerase catalytic subunit family. Heterodimer of a large (catalytic) subunit and a small (regulatory) subunit.

The catalysed reaction is RNA(n) + ATP = RNA(n)-3'-adenine ribonucleotide + diphosphate. Functionally, polymerase that creates the 3'-poly(A) tail of mRNA's. The protein is Poly(A) polymerase catalytic subunit (PAPL) of Serinus (CNPV).